Here is a 351-residue protein sequence, read N- to C-terminus: Uroporphyrinogen decarboxylase (351 aa).

Substrate-binding positions include 27-31 (RQAGR), aspartate 77, tyrosine 154, threonine 209, and histidine 327.

Belongs to the uroporphyrinogen decarboxylase family. As to quaternary structure, homodimer.

It localises to the cytoplasm. It carries out the reaction uroporphyrinogen III + 4 H(+) = coproporphyrinogen III + 4 CO2. It functions in the pathway porphyrin-containing compound metabolism; protoporphyrin-IX biosynthesis; coproporphyrinogen-III from 5-aminolevulinate: step 4/4. Its function is as follows. Catalyzes the decarboxylation of four acetate groups of uroporphyrinogen-III to yield coproporphyrinogen-III. In Thioalkalivibrio sulfidiphilus (strain HL-EbGR7), this protein is Uroporphyrinogen decarboxylase.